The following is a 153-amino-acid chain: Ubiquitin/ISG15-conjugating enzyme E2 L6 (153 aa).

The 148-residue stretch at 2-149 folds into the UBC core domain; it reads MASMRVVKEL…AEEFTLRFGV (148 aa). Residue Cys86 is the Glycyl thioester intermediate of the active site.

The protein belongs to the ubiquitin-conjugating enzyme family. In terms of assembly, interacts with RNF19A, RNF19B and RNF144B. Interacts with FLT3 (tyrosine phosphorylated). Post-translationally, ISGylated. In terms of tissue distribution, present in natural killer cells (at protein level).

The catalysed reaction is S-ubiquitinyl-[E1 ubiquitin-activating enzyme]-L-cysteine + [E2 ubiquitin-conjugating enzyme]-L-cysteine = [E1 ubiquitin-activating enzyme]-L-cysteine + S-ubiquitinyl-[E2 ubiquitin-conjugating enzyme]-L-cysteine.. Its pathway is protein modification; protein ubiquitination. In terms of biological role, catalyzes the covalent attachment of ubiquitin or ISG15 to other proteins. Functions in the E6/E6-AP-induced ubiquitination of p53/TP53. Promotes ubiquitination and subsequent proteasomal degradation of FLT3. This chain is Ubiquitin/ISG15-conjugating enzyme E2 L6 (UBE2L6), found in Homo sapiens (Human).